The primary structure comprises 233 residues: 5'-methylthioadenosine/S-adenosylhomocysteine nucleosidase (233 aa).

Glu-12 acts as the Proton acceptor in catalysis. Substrate is bound by residues Gly-78, Ile-156, and 177–178; that span reads ME. Catalysis depends on Asp-201, which acts as the Proton donor.

Belongs to the PNP/UDP phosphorylase family. MtnN subfamily.

The catalysed reaction is S-adenosyl-L-homocysteine + H2O = S-(5-deoxy-D-ribos-5-yl)-L-homocysteine + adenine. It carries out the reaction S-methyl-5'-thioadenosine + H2O = 5-(methylsulfanyl)-D-ribose + adenine. The enzyme catalyses 5'-deoxyadenosine + H2O = 5-deoxy-D-ribose + adenine. It participates in amino-acid biosynthesis; L-methionine biosynthesis via salvage pathway; S-methyl-5-thio-alpha-D-ribose 1-phosphate from S-methyl-5'-thioadenosine (hydrolase route): step 1/2. In terms of biological role, catalyzes the irreversible cleavage of the glycosidic bond in both 5'-methylthioadenosine (MTA) and S-adenosylhomocysteine (SAH/AdoHcy) to adenine and the corresponding thioribose, 5'-methylthioribose and S-ribosylhomocysteine, respectively. Also cleaves 5'-deoxyadenosine, a toxic by-product of radical S-adenosylmethionine (SAM) enzymes, into 5-deoxyribose and adenine. This is 5'-methylthioadenosine/S-adenosylhomocysteine nucleosidase from Listeria innocua serovar 6a (strain ATCC BAA-680 / CLIP 11262).